Consider the following 352-residue polypeptide: Mitochondrial ubiquitin ligase activator of NFKB 1 (352 aa).

The Cytoplasmic segment spans residues Met1 to Ser8. A helical transmembrane segment spans residues Leu9–Tyr29. Over Arg30–Arg238 the chain is Mitochondrial intermembrane. Lys52 is covalently cross-linked (Glycyl lysine isopeptide (Lys-Gly) (interchain with G-Cter in ubiquitin)). Residues Leu239 to Leu259 form a helical membrane-spanning segment. Topologically, residues Arg260 to Ser352 are cytoplasmic. Residues Lys273 and Lys299 each participate in a glycyl lysine isopeptide (Lys-Gly) (interchain with G-Cter in ubiquitin) cross-link. The RING-type zinc-finger motif lies at Cys302 to Arg340.

As to quaternary structure, homooligomer. Interacts with MAP3K7/TAK1. Interacts with UBC9. Interacts with and sumoylates DNM1L. Interacts with MAVS. Interacts with TP53 (via N-terminus); the interaction leads to ubiquitination and proteasomal degradation of TP53. Post-translationally, ubiquitinated by PRKN during mitophagy, leading to its degradation and enhancement of mitophagy. Deubiquitinated by USP30.

It localises to the mitochondrion outer membrane. Its subcellular location is the peroxisome. It carries out the reaction S-ubiquitinyl-[E2 ubiquitin-conjugating enzyme]-L-cysteine + [acceptor protein]-L-lysine = [E2 ubiquitin-conjugating enzyme]-L-cysteine + N(6)-ubiquitinyl-[acceptor protein]-L-lysine.. It functions in the pathway protein modification; protein ubiquitination. Its pathway is protein modification; protein sumoylation. Exhibits weak E3 ubiquitin-protein ligase activity. E3 ubiquitin ligases accept ubiquitin from an E2 ubiquitin-conjugating enzyme in the form of a thioester and then directly transfer the ubiquitin to targeted substrates. Can ubiquitinate AKT1 preferentially at 'Lys-284' involving 'Lys-48'-linked polyubiquitination and seems to be involved in regulation of Akt signaling by targeting phosphorylated Akt to proteasomal degradation. Mediates polyubiquitination of cytoplasmic TP53 at 'Lys-24' which targets TP53 for proteasomal degradation, thus reducing TP53 levels in the cytoplasm and mitochondrion. Proposed to preferentially act as a SUMO E3 ligase at physiological concentrations. Plays a role in the control of mitochondrial morphology by promoting mitochondrial fragmentation, and influences mitochondrial localization. Likely to promote mitochondrial fission through negatively regulating the mitochondrial fusion proteins MFN1 and MFN2, acting in a pathway that is parallel to the PRKN/PINK1 regulatory pathway. May also be involved in the sumoylation of the membrane fission protein DNM1L. Inhibits cell growth. When overexpressed, activates JNK through MAP3K7/TAK1 and induces caspase-dependent apoptosis. Involved in the modulation of innate immune defense against viruses by inhibiting RIGI-dependent antiviral response. Can mediate RIGI sumoylation and disrupt its polyubiquitination. This Macaca fascicularis (Crab-eating macaque) protein is Mitochondrial ubiquitin ligase activator of NFKB 1 (MUL1).